The following is a 194-amino-acid chain: MKRERLMSINKEKAEAAIYQFLEAIGENPNREGLLDTPKRVAKMYAEMFLGLGKDPKEEFTAVFKEHHEDVVIVKDISFYSVCEHHLVPFYGKAHIAYLPSDGRVTGLSKLARAVEVASKRPQLQERLTSQIADALVEALNPKGTLVMVEAEHMCMTMRGIKKPGSKTITTTARGLYKESRAERQEVISLMTKD.

3 residues coordinate Zn(2+): Cys83, His86, and Cys155.

This sequence belongs to the GTP cyclohydrolase I family. As to quaternary structure, toroid-shaped homodecamer, composed of two pentamers of five dimers.

The catalysed reaction is GTP + H2O = 7,8-dihydroneopterin 3'-triphosphate + formate + H(+). It functions in the pathway cofactor biosynthesis; 7,8-dihydroneopterin triphosphate biosynthesis; 7,8-dihydroneopterin triphosphate from GTP: step 1/1. The chain is GTP cyclohydrolase 1 from Streptococcus pyogenes serotype M3 (strain ATCC BAA-595 / MGAS315).